We begin with the raw amino-acid sequence, 97 residues long: Nucleoid-associated protein HP_0035 (97 aa).

Belongs to the YbaB/EbfC family. In terms of assembly, homodimer.

The protein localises to the cytoplasm. The protein resides in the nucleoid. Functionally, binds to DNA and alters its conformation. May be involved in regulation of gene expression, nucleoid organization and DNA protection. The polypeptide is Nucleoid-associated protein HP_0035 (Helicobacter pylori (strain ATCC 700392 / 26695) (Campylobacter pylori)).